We begin with the raw amino-acid sequence, 184 residues long: ADP-ribosylation factor-like protein 3 (184 aa).

Gly-2 carries the N-myristoyl glycine lipid modification. GTP is bound by residues 24 to 31, 68 to 72, and 127 to 130; these read GLDNAGKT, DIGGQ, and NKQD.

The protein belongs to the small GTPase superfamily. Arf family.

It localises to the golgi apparatus. Functionally, GTP-binding protein that may be involved in protein trafficking; may modulate vesicle budding and uncoating within the Golgi apparatus. This chain is ADP-ribosylation factor-like protein 3 (arl-3), found in Caenorhabditis elegans.